Consider the following 362-residue polypeptide: G-protein coupled receptor 4 (362 aa).

The Extracellular portion of the chain corresponds to 1 to 8 (MGNRTLEG). Asn-3 is a glycosylation site (N-linked (GlcNAc...) asparagine). The chain crosses the membrane as a helical span at residues 9–45 (CHVDSRMDHLFPPSLYIFVIGVGLPTNCLALWAAYRQ). Disulfide bonds link Cys-9–Cys-258 and Cys-90–Cys-168. Residues 46 to 49 (VRQR) are Cytoplasmic-facing. A helical membrane pass occupies residues 50 to 80 (NELGVYLMNLSIADLLYICTLPLWVDYFLHH). The Extracellular portion of the chain corresponds to 81–85 (DNWIH). The chain crosses the membrane as a helical span at residues 86–121 (GPGSCKLFGFIFYTNIYISIAFLCCISVDRYLAVAH). The Cytoplasmic portion of the chain corresponds to 122-129 (PLRFARLR). Residues 130-156 (RVKTAVAVSSVVWATELGANSAPLFHD) form a helical membrane-spanning segment. Residues 157 to 172 (ELFRDRYNHTFCFEKF) are Extracellular-facing. The tract at residues 157–172 (ELFRDRYNHTFCFEKF) is extracellular loop 2 (ECL2). Asn-164 is a glycosylation site (N-linked (GlcNAc...) asparagine). A helical transmembrane segment spans residues 173 to 210 (PMEGWVAWMNLYRVFVGFLFPWALMLLSYRGILRAVRG). At 211 to 214 (SVST) the chain is on the cytoplasmic side. A helical membrane pass occupies residues 215 to 250 (ERQEKVKIKRLALSLIAIVLVCFAPYHVLLLSRSAV). The Extracellular portion of the chain corresponds to 251–260 (YLRRPRDCGF). A helical transmembrane segment spans residues 261-289 (EERVFSAYHSSLAFTSLNCVADPILYCLV). The Cytoplasmic portion of the chain corresponds to 290–362 (NEGARSDVAK…VQLKMLPPAQ (73 aa)).

It belongs to the G-protein coupled receptor 1 family.

Its subcellular location is the cell membrane. Its activity is regulated as follows. Activated by a network of residues that connects an extracellular-facing cavity to Glu-145, a conserved charged residue buried in the transmembrane core of the receptor. Protonation likely drives conformational changes in extracellular loop 2 (ECL2), which stabilizes movement of transmembrane 3 (TM3) and a series of rearrangements that connect the extracellular-facing cavity to Glu-145, a residue only conserved in proton-sensing G-protein coupled receptors. In terms of biological role, proton-sensing G-protein coupled receptor activated by extracellular pH, which is required to monitor pH changes and generate adaptive reactions. Activated by an optimal pH of 6.8-7.2. Ligand binding causes a conformation change that triggers signaling via guanine nucleotide-binding proteins (G proteins) and modulates the activity of downstream effectors, such as adenylate cyclase. GPR4 is mainly coupled to G(s) G proteins and mediates activation of adenylate cyclase activity. May also couple with G(q) and G(12)/G(13) G proteins. Acts as a key regulator of respiratory sensitivity to CO2/H(+) in brain retrotrapezoid nucleus neurons: acts by mediating detection of protons generated by the formation of carbonic acid in the blood, an important mechanism to impulse to breathe. Also acts as a regulator of acid secretion in the kidney collecting duct by maintaining acid-base homeostasis in the kidney. Acidosis-induced GPR4 activation increases paracellular gap formation and permeability of vascular endothelial cells, possibly through the G(12)/G(13)/Rho GTPase signaling pathway. In Bos taurus (Bovine), this protein is G-protein coupled receptor 4 (GPR4).